A 414-amino-acid polypeptide reads, in one-letter code: Serine hydroxymethyltransferase (414 aa).

Residues Leu-118 and 122-124 each bind (6S)-5,6,7,8-tetrahydrofolate; that span reads GHL. Position 226 is an N6-(pyridoxal phosphate)lysine (Lys-226). (6S)-5,6,7,8-tetrahydrofolate is bound at residue 353 to 355; sequence SPF.

The protein belongs to the SHMT family. As to quaternary structure, homodimer. Pyridoxal 5'-phosphate is required as a cofactor.

It localises to the cytoplasm. The enzyme catalyses (6R)-5,10-methylene-5,6,7,8-tetrahydrofolate + glycine + H2O = (6S)-5,6,7,8-tetrahydrofolate + L-serine. Its pathway is one-carbon metabolism; tetrahydrofolate interconversion. It functions in the pathway amino-acid biosynthesis; glycine biosynthesis; glycine from L-serine: step 1/1. Catalyzes the reversible interconversion of serine and glycine with tetrahydrofolate (THF) serving as the one-carbon carrier. This reaction serves as the major source of one-carbon groups required for the biosynthesis of purines, thymidylate, methionine, and other important biomolecules. Also exhibits THF-independent aldolase activity toward beta-hydroxyamino acids, producing glycine and aldehydes, via a retro-aldol mechanism. The sequence is that of Serine hydroxymethyltransferase from Blochmanniella floridana.